A 992-amino-acid polypeptide reads, in one-letter code: MKGLSGSRSHHHGITCEAACDSLSHHSDHKPYLLSPVDHHPADHPYYTQRNSFQAECVGPFSDPLASSTFPRRHYTSQQELKDESALVPRTLATKANRLPTNLLDQFERQLPLSRDGYHTLQYKRTAVEHRSDSPGRIRHLVHSVQKLFTKSHSLEGPSKGSVNGGKASPDESQTLRYGKRSKSKERRSESKARSNASNASPTSPSWWSSDDNLDGDMCLYHTPSGVMTMGRCPDRSASQYFMEAYNTISEQAVKASRSNNDIKCSTCANLPVTLDAPLLKKSAWSSTLTVSRAREVYQKASVNMDQAMVKSEACQQERSCQYLQVPQDEWSGYTPRGKDDEIPCRRMRSGSYIKAMGDEDSGDSDTSPKPSPKVAARRESYLKATQPSLTELTTLKISNEHSPKLQIRSHSYLRAVSEVSINRSLDSLDPAGLLTSPKFRSRNESYMRAMSTISQVSEMEVNGQFESVCESVFSELESQAVEALDLPLPGCFRMRSHSYVRAIEKGCSQDDECVSLRSSSPPRTTTTVRTIQSSTGVIKLSSAVEVSSCITTYKKTPPPVPPRTTTKPFISITAQSSTESAQDAYMDGQGQRGDMISQSGLSNSTESLDSMKALTAAIEAANAQIHGPASQHMGSNAAAVTTTTTIATVTTEDRKKDFKKNRCLSIGIQVDDAEEPEKMAESKTSNKFQSVGVQVEEEKCFRRFTRSNSVTTAVQADLDFHDNLENSLESIEDNSCPGPMARQFSRDASTSTVSIQGSGNHYHACAADDDFDTDFDPSILPPPDPWIDSITEDPLEAVQRSVCHRDGHWFLKLLQAERDRMEGWCKLMEREERENNLPEDILGKIRTAVGSAQLLMAQKFYQFRELCEENLNPNAHPRPTSQDLAGFWDMLQLSIENISMKFDELHQLKANNWKQMDPLDKKERRAPPPVPKKPAKGPAPLIRERSLESSQRQEARKRLMAAKRAASVRQNSATESAESIEIYIPEAQTRL.

2 disordered regions span residues Thr-150 to Ser-209 and Lys-355 to Ala-376. Ser-169 is subject to Phosphoserine. The span at Arg-194 to Ser-209 shows a compositional bias: low complexity. Phosphoserine is present on residues Ser-362, Ser-365, Ser-368, Ser-372, Ser-389, Ser-418, Ser-421, Ser-425, Ser-428, Ser-437, Ser-509, Ser-516, and Ser-578. The residue at position 579 (Thr-579) is a Phosphothreonine. Residues Ser-581 and Ser-605 each carry the phosphoserine modification. Thr-606 carries the post-translational modification Phosphothreonine. Residues Ser-608 and Ser-611 each carry the phosphoserine modification. 2 interaction with DYL2 regions span residues Leu-665 to Glu-676 and Asn-687 to Glu-698. Residues Trp-914 to Ser-980 form a disordered region. Composition is skewed to basic and acidic residues over residues Asp-918–Ala-927 and Ile-943–Lys-958. At Ser-947 the chain carries Phosphoserine. Residues Val-969 to Ala-978 show a composition bias toward polar residues. The short motif at Thr-990–Leu-992 is the PDZ-binding element.

This sequence belongs to the SAPAP family. Interacts with the guanylate kinase-like domain of DLG1, DLG2, DLG3, DLG4 and AIP1. Interacts with the PDZ domain of SHANK1, SHANK2 and SHANK3. Found in a complex with DLG4 and SHANK1, SHANK2 or SHANK3. Found in a complex with DLG4 and BEGAIN. Interacts with DYL2 and LRFN1. Interacts with MPP2 (via the SH3-Guanylate kinase-like sub-module). Post-translationally, ubiquitinated by TRIM3; leading to proteasomal degradation. Highest levels in the neocortex, part of the hippocampus, the granule cell layer of the cerebellum, the glomerular layer of the olfactory bulb, the inner plexiform layer of the retina, the ventral and dorsal horn of the spinal cord, the neuromuscular junction and the submandibular ganglion.

It is found in the cell membrane. The protein resides in the postsynaptic density. Its subcellular location is the synapse. Part of the postsynaptic scaffold in neuronal cells. This chain is Disks large-associated protein 1 (Dlgap1), found in Mus musculus (Mouse).